The following is a 169-amino-acid chain: Adenine phosphoribosyltransferase (169 aa).

The protein belongs to the purine/pyrimidine phosphoribosyltransferase family. As to quaternary structure, homodimer.

Its subcellular location is the cytoplasm. The enzyme catalyses AMP + diphosphate = 5-phospho-alpha-D-ribose 1-diphosphate + adenine. The protein operates within purine metabolism; AMP biosynthesis via salvage pathway; AMP from adenine: step 1/1. In terms of biological role, catalyzes a salvage reaction resulting in the formation of AMP, that is energically less costly than de novo synthesis. The sequence is that of Adenine phosphoribosyltransferase from Mycoplasmopsis synoviae (strain 53) (Mycoplasma synoviae).